Reading from the N-terminus, the 80-residue chain is MLNDMPALTHEQQQLAVERIQALMAEGMSSGAAIAQVARELRAGYTGERVTLRWEEDTEVLETPAARAETDPYDSNPDDD.

Positions 58–80 are disordered; sequence TEVLETPAARAETDPYDSNPDDD.

Belongs to the UPF0181 family.

The polypeptide is UPF0181 protein SG1330 (Sodalis glossinidius (strain morsitans)).